The chain runs to 148 residues: 3-dehydroquinate dehydratase (148 aa).

Tyrosine 23 acts as the Proton acceptor in catalysis. Asparagine 74, histidine 80, and aspartate 87 together coordinate substrate. Histidine 100 (proton donor) is an active-site residue. Substrate contacts are provided by residues 101–102 (IS) and arginine 111.

Belongs to the type-II 3-dehydroquinase family. Homododecamer.

The catalysed reaction is 3-dehydroquinate = 3-dehydroshikimate + H2O. It functions in the pathway metabolic intermediate biosynthesis; chorismate biosynthesis; chorismate from D-erythrose 4-phosphate and phosphoenolpyruvate: step 3/7. Catalyzes a trans-dehydration via an enolate intermediate. This chain is 3-dehydroquinate dehydratase, found in Caldanaerobacter subterraneus subsp. tengcongensis (strain DSM 15242 / JCM 11007 / NBRC 100824 / MB4) (Thermoanaerobacter tengcongensis).